A 222-amino-acid chain; its full sequence is PKHD-type hydroxylase Syncc9605_1577 (222 aa).

One can recognise a Fe2OG dioxygenase domain in the interval 80-175 (KVHSLLVSRS…RYVCVGWIES (96 aa)). Fe cation contacts are provided by His98, Asp100, and His156. Arg166 contacts 2-oxoglutarate.

Fe(2+) is required as a cofactor. Requires L-ascorbate as cofactor.

This Synechococcus sp. (strain CC9605) protein is PKHD-type hydroxylase Syncc9605_1577.